The primary structure comprises 166 residues: NADH-quinone oxidoreductase subunit E (166 aa).

[2Fe-2S] cluster is bound by residues Cys-92, Cys-97, Cys-133, and Cys-137.

The protein belongs to the complex I 24 kDa subunit family. As to quaternary structure, composed of 13 different subunits. Subunits NuoCD, E, F, and G constitute the peripheral sector of the complex. [2Fe-2S] cluster is required as a cofactor.

It carries out the reaction a quinone + NADH + 5 H(+)(in) = a quinol + NAD(+) + 4 H(+)(out). NDH-1 shuttles electrons from NADH, via FMN and iron-sulfur (Fe-S) centers, to quinones in the respiratory chain. The immediate electron acceptor for the enzyme in this species is believed to be ubiquinone. Couples the redox reaction to proton translocation (for every two electrons transferred, four hydrogen ions are translocated across the cytoplasmic membrane), and thus conserves the redox energy in a proton gradient. The polypeptide is NADH-quinone oxidoreductase subunit E (nuoE) (Pseudomonas aeruginosa (strain ATCC 15692 / DSM 22644 / CIP 104116 / JCM 14847 / LMG 12228 / 1C / PRS 101 / PAO1)).